Consider the following 146-residue polypeptide: uncharacterized protein (146 aa).

The interval 67 to 93 (DDNGMESGFCSGATSTGQSASTSPAPV) is disordered. Residues 77–92 (SGATSTGQSASTSPAP) show a composition bias toward low complexity.

This is an uncharacterized protein from Caenorhabditis elegans.